The sequence spans 316 residues: Acetaldehyde dehydrogenase (316 aa).

NAD(+) is bound at residue 12–15 (SGNI). The active-site Acyl-thioester intermediate is Cys-132. NAD(+)-binding positions include 163–171 (SAGPGTRAN) and Asn-289.

It belongs to the acetaldehyde dehydrogenase family.

It carries out the reaction acetaldehyde + NAD(+) + CoA = acetyl-CoA + NADH + H(+). The sequence is that of Acetaldehyde dehydrogenase (bphG) from Bordetella avium (strain 197N).